Here is a 235-residue protein sequence, read N- to C-terminus: MLNSGSLIWLRIDYMALTMMGKKRGMIQLFDEKGNAIVCTVIQAEPNVITQIKTKETDGYTALQLGFEKVTGKTQHTIEARTGKPRLGHFKKAGVESRRFLVESRLDSTEEYTLGQEISVDTFNGIEFVDATAISKGKGYQGVMKRHNFAGGPASHGSGHHRHAGSTGMRSTPGRGLPGGKKAGQMGNERVTVQNLRIVKVDSENHVIVVKGQVPGPRNGLVYITQAKKLAKKKS.

The disordered stretch occupies residues 150–189 (AGGPASHGSGHHRHAGSTGMRSTPGRGLPGGKKAGQMGNE).

Belongs to the universal ribosomal protein uL3 family. In terms of assembly, part of the 50S ribosomal subunit. Forms a cluster with proteins L14 and L19.

One of the primary rRNA binding proteins, it binds directly near the 3'-end of the 23S rRNA, where it nucleates assembly of the 50S subunit. The chain is Large ribosomal subunit protein uL3 from Protochlamydia amoebophila (strain UWE25).